The following is a 311-amino-acid chain: Pyrimidine-specific ribonucleoside hydrolase RihA (311 aa).

The active site involves histidine 240.

The protein belongs to the IUNH family. RihA subfamily.

Hydrolyzes cytidine or uridine to ribose and cytosine or uracil, respectively. This chain is Pyrimidine-specific ribonucleoside hydrolase RihA, found in Salmonella gallinarum (strain 287/91 / NCTC 13346).